A 353-amino-acid polypeptide reads, in one-letter code: Uroporphyrinogen decarboxylase (353 aa).

Residues 29-33 (RQAGR), Asp-78, Tyr-154, Ser-209, and His-322 contribute to the substrate site.

Belongs to the uroporphyrinogen decarboxylase family. As to quaternary structure, homodimer.

It is found in the cytoplasm. It catalyses the reaction uroporphyrinogen III + 4 H(+) = coproporphyrinogen III + 4 CO2. It participates in porphyrin-containing compound metabolism; protoporphyrin-IX biosynthesis; coproporphyrinogen-III from 5-aminolevulinate: step 4/4. In terms of biological role, catalyzes the decarboxylation of four acetate groups of uroporphyrinogen-III to yield coproporphyrinogen-III. The protein is Uroporphyrinogen decarboxylase of Bacillus velezensis (strain DSM 23117 / BGSC 10A6 / LMG 26770 / FZB42) (Bacillus amyloliquefaciens subsp. plantarum).